The primary structure comprises 491 residues: Ligand-gated ion channel 50 (491 aa).

The N-terminal stretch at 1–19 is a signal peptide; sequence MRFLLVLQLVFFYFSAATT. N-linked (GlcNAc...) asparagine glycans are attached at residues Asn55 and Asn101. Cys157 and Cys171 form a disulfide bridge. 3 helical membrane-spanning segments follow: residues 241 to 261, 265 to 287, and 302 to 322; these read LFQS…GFFF, SVSA…FGNV, and VWMI…AIVC. The N-linked (GlcNAc...) asparagine glycan is linked to Asn418. The chain crosses the membrane as a helical span at residues 465–485; that stretch reads MIMFPLSFLIFNVVYWSIYFM.

Belongs to the ligand-gated ion channel (TC 1.A.9) family.

The protein resides in the postsynaptic cell membrane. It is found in the cell membrane. The chain is Ligand-gated ion channel 50 (lgc-50) from Caenorhabditis elegans.